Consider the following 788-residue polypeptide: uncharacterized protein (788 aa).

One can recognise an Adrift-type SAM-dependent 2'-O-MTase domain in the interval 485 to 693; sequence EMITTAWIKL…IYIVLKSYKG (209 aa). S-adenosyl-L-methionine-binding residues include Gly521 and Asp604. Lys645 (proton acceptor) is an active-site residue.

This is an uncharacterized protein from Acanthamoeba polyphaga (Amoeba).